The chain runs to 142 residues: Ribosome-binding factor A (142 aa).

The segment covering 118–130 has biased composition (basic and acidic residues); that stretch reads DKAKQKQAGREDD. A disordered region spans residues 118–142; the sequence is DKAKQKQAGREDDTPSVDEQEKDTD. The segment covering 131–142 has biased composition (acidic residues); sequence TPSVDEQEKDTD.

Belongs to the RbfA family. As to quaternary structure, monomer. Binds 30S ribosomal subunits, but not 50S ribosomal subunits or 70S ribosomes.

Its subcellular location is the cytoplasm. In terms of biological role, one of several proteins that assist in the late maturation steps of the functional core of the 30S ribosomal subunit. Associates with free 30S ribosomal subunits (but not with 30S subunits that are part of 70S ribosomes or polysomes). Required for efficient processing of 16S rRNA. May interact with the 5'-terminal helix region of 16S rRNA. In Shewanella denitrificans (strain OS217 / ATCC BAA-1090 / DSM 15013), this protein is Ribosome-binding factor A.